A 59-amino-acid chain; its full sequence is Membrane-associated ATPase epsilon chain (59 aa).

To E.hirae NtpH. As to quaternary structure, sul-ATPase is composed of six (or maybe five) subunits: alpha, beta, delta, gamma, C (proteolipid), and possibly epsilon.

The catalysed reaction is ATP + H2O + 4 H(+)(in) = ADP + phosphate + 5 H(+)(out). The protein is Membrane-associated ATPase epsilon chain (atpE) of Sulfurisphaera tokodaii (strain DSM 16993 / JCM 10545 / NBRC 100140 / 7) (Sulfolobus tokodaii).